We begin with the raw amino-acid sequence, 347 residues long: MVGLNNAVSLDIEEICNGGKEHHVKTCHGSVSVVVYGDQEKPALITYPDVALNYMSCFQGLFLCPEAVSLLLHNFCIYHISPPGHEFGAAPVCSNDPSPSVEDLADQILEVLNFFSLEAVMCMGITAGAYILSLFAIKHKERVLGLILISPLCKAPSWSEWFYYKVVSNLLYYYGMSGLLKDIFLQRYFSKEARGSSEVPERDVVHECRRLLGERHGSSLMRFLEAVNRRHDLTDGLKSLKCRTLIFVGDQSPFHSETLHMVTALDRKYSALVEVQACGSMVTEEQPHAMLIPMEFFFMGFGLYRPGRVSDSPRSPLSPSCISPELLSPESLGLKLKPIKTRVPTKC.

It belongs to the NDRG family. Interacts with the heterodimers formed by GB1 and GG1, or GB1 and GG2. Interacts with RGS1.

Its subcellular location is the cytoplasm. Functionally, involved in a signaling pathway that modulates root auxin transport and auxin gradients. Acts partially by positively regulating the auxin carrier PIN2 and AUX1. Acts, together with GB1 as positive regulator of meristem initiation and branching. GB1 and NDL3 positively regulate basipetal inflorescence auxin transport and modulate MAX2 expression in shoots, which regulates organ and lateral meristem formation by the establishment and maintenance of auxin gradients. The sequence is that of Protein NDL3 from Arabidopsis thaliana (Mouse-ear cress).